The primary structure comprises 104 residues: Circadian clock oscillator protein KaiB (104 aa).

This sequence belongs to the KaiB family. As to quaternary structure, the KaiABC complex composition changes during the circadian cycle to control KaiC phosphorylation. Complexes KaiC(6), KaiA(2-4):KaiC(6), KaiB(6):KaiC(6) and KaiC(6):KaiB(6):KaiA(12) are among the most important forms, many form cooperatively. Undergoes a major conformational rearrangment; in the free state forms homotetramers as a dimer of dimers. When bound to the CI domain of KaiC switches to a monomeric thioredoxin-fold (KaiB(fs)). KaiB(fs) binds CikA, leading it to dephosphorylate phospho-RpaA.

Functionally, key component of the KaiABC oscillator complex, which constitutes the main circadian regulator in cyanobacteria. Complex composition changes during the circadian cycle to control KaiC phosphorylation. KaiA stimulates KaiC autophosphorylation, while KaiB sequesters KaiA, leading to KaiC autodephosphorylation. Phospho-Ser-431 KaiC accumulation triggers binding of KaiB to form the KaiB(6):KaiC(6) complex, leading to changes in output regulators CikA and SasA. KaiB switches to a thioredoxin-like fold (KaiB(fs)) when bound to KaiC. KaiB(6):KaiC(6) formation exposes a site for KaiA binding that sequesters KaiA from KaiC, making the KaiC(6):KaiB(6):KaiA(12) complex that results in KaiC autodephosphorylation. A metamorphic protein which reversibly switches between an inactive tetrameric fold and a rare, thioredoxin-like monomeric fold (KaiB(fs)). KaiB(fs) binds phospho-KaiC, KaiA and CikA. KaiA and CikA compete for binding to KaiB(fs), and KaiB(fs) and SasA compete for binding to KaiC, thus the clock oscillator and output signal pathway are tightly coupled. This is Circadian clock oscillator protein KaiB from Microcystis aeruginosa (strain NIES-843 / IAM M-2473).